Here is a 1712-residue protein sequence, read N- to C-terminus: MERNVLTTFSQEMSQLILNEMPKAEYSSLFNDFVESEFFLIDGDSLLITCICEISFKPGQNLHFFYLVERYLVDLISKGGQFTIVFFKDAEYAYFNFPELLSLRTALILHLQKNTTIDVRTTFSRCLSKEWGSFLEESYPYFLIVADEGLNDLQTQLFNFLIIHSWARKVNVVLSSGQESDVLCLYAYLLPSMYRHQIFSWKNKQNIKDAYTTLLNQLERFKLSALAPLFGSLKWNNITEEAHKTVSLLTQVWPEGSDIRRVFCVTSCSLSLRMYHRFLGNREPSSGQETEIQQVNSNCLTLQEMEDLCKLHCLTVVFLLHLPLSQRACARVITSHWAEDMKPLLQMKKWCEYFILRNIHTFEFWNLNLIHLSDLNDELLLKNIAFYYENENVKGLHLNLGDTIMKDYEYLWNTVSKLVRDFEVGQPFPLRTTKVCFLEKKPSPIKDSSNEMVPNLGFIPTSSFVVDKFAGDILKDLPFLKSDDPIVTSLVKQKEFDELVHWHSHKPLSDDYDRSRCQFDEKSRDPRVLRSVQKYHVFQRFYGNSLETVSSKIIVTQTIKSKKDFSGPKSKKAHETKAEIIARENKKRLFAREEQKEEQKWNALSFSIEEQLKENLHSGIKSLEDFLKSCKSSCVKLQVEMVGLTACLKAWKEHCRSEEGKTTKDLSIAVQVMKRIHSLMEKYSELLQEDDRQLIARCLKYLGFDELASSLHPAQDAENDVKVKKRNKYSVGIGPARFQLQYMGHYLIRDERKDPDPRVQDFIPDTWQRELLDVVDKNESAVIVAPTSSGKTYASYYCMEKVLKESDDGVVVYVAPTKALVNQVAATVQNRFTKNLPSGEVLCGVFTREYRHDALNCQVLITVPACFEILLLAPHRQNWVKKIRYVIFDEVHCLGGEIGAEIWEHLLVMIRCPFLALSATISNPEHLTEWLQSVKWYWKQEDKIIENNTASKRHVGRQAGFPKDYLQVKQSYKVRLVLYGERYNDLEKHVCSIKHGDIHFDHFHPCAALTTDHIERYGFPPDLTLSPRESIQLYDAMFQIWKSWPRAQELCPENFIHFNNKLVIKKMDARKYEESLKAELTSWIKNGNVEQARMVLQNLSPEADLSPENMITMFPLLVEKLRKMEKLPALFFLFKLGAVENAAESVSTFLKKKQETKRPPKADKEAHVMANKLRKVKKSIEKQKIIDEKSQKKTRNVDQSLIHEAEHDNLVKCLEKNLEIPQDCTYADQKAVDTETLQKVFGRVKFERKGEELKALAERGIGYHHSAMSFKEKQLVEILFRKGYLRVVTATGTLALGVNMPCKSVVFAQNSVYLDALNYRQMSGRAGRRGQDLMGDVYFFDIPFPKIGKLIKSNVPELRGHFPLSITLVLRLMLLASKGDDPEDAKAKVLSVLKHSLLSFKQPRVMDMLKLYFLFSLQFLVKEGYLDQEGNPMGFAGLVSHLHYHEPSNLVFVSFLVNGLFHDLCQPTRKGSKHFSQDVMEKLVLVLAHLFGRRYFPPKFQDAHFEFYQSKVFLDDLPEDFSDALDEYNMKIMEDFTTFLRIVSKLADMNQEYQLPLSKIKFTGKECEDSQLVSHLMSCKEGRVAISPFVCLSGNFDDDLLRLETPNHVTLGTIGVNRSQAPVLLSQKFDNRGRKMSLNAYALDFYKHGSLIGLVQDNRMNEGDAYYLLKDFALTIKSISVSLRELCENEDDNVVLAFEQLSTTFWEKLNKV.

Positions L772–K939 constitute a Helicase ATP-binding domain. Residue A785–T792 participates in ATP binding. Positions D889–H892 match the DEVH box motif. A Helicase C-terminal domain is found at Y1226–L1370.

The protein belongs to the helicase family. Interacts with EXOSC1, EXOSC4, RIGI, IFIH1/MDA5 and DHX58/LGP2. As to expression, brain, lymph node, prostate, stomach, thyroid, tongue, trachea, uterus, skeletal muscle, spleen, kidney, liver and small intestine.

It is found in the cytoplasm. It catalyses the reaction ATP + H2O = ADP + phosphate + H(+). Functionally, positively regulates RIGI- and IFIH1/MDA5-dependent type I interferon and interferon inducible gene expression in response to viral infection. Binds ssRNA, dsRNA and dsDNA and can promote the binding of RIGI to dsRNA. Exhibits antiviral activity against hepatitis C virus and vesicular stomatitis virus (VSV). This is Probable ATP-dependent RNA helicase DDX60 (DDX60) from Homo sapiens (Human).